A 259-amino-acid chain; its full sequence is Putative hydro-lyase Rxyl_2409 (259 aa).

The interval 1–24 (MGAPGAAEARERIRRGEHAGPTAG) is disordered. The span at 8-18 (EARERIRRGEH) shows a compositional bias: basic and acidic residues.

This sequence belongs to the D-glutamate cyclase family.

This is Putative hydro-lyase Rxyl_2409 from Rubrobacter xylanophilus (strain DSM 9941 / JCM 11954 / NBRC 16129 / PRD-1).